Here is a 292-residue protein sequence, read N- to C-terminus: Nitrogenase iron protein 1 (292 aa).

An ATP-binding site is contributed by 12 to 19; it reads GKGGIGKS. Cys101 provides a ligand contact to [4Fe-4S] cluster. At Arg104 the chain carries ADP-ribosylarginine; by dinitrogenase reductase ADP-ribosyltransferase. Cys135 contacts [4Fe-4S] cluster.

It belongs to the NifH/BchL/ChlL family. Homodimer. Requires [4Fe-4S] cluster as cofactor. The reversible ADP-ribosylation of Arg-104 inactivates the nitrogenase reductase and regulates nitrogenase activity.

It carries out the reaction N2 + 8 reduced [2Fe-2S]-[ferredoxin] + 16 ATP + 16 H2O = H2 + 8 oxidized [2Fe-2S]-[ferredoxin] + 2 NH4(+) + 16 ADP + 16 phosphate + 6 H(+). Its function is as follows. The key enzymatic reactions in nitrogen fixation are catalyzed by the nitrogenase complex, which has 2 components: the iron protein and the molybdenum-iron protein. The protein is Nitrogenase iron protein 1 (nifH1) of Paenibacillus durus (Paenibacillus azotofixans).